The primary structure comprises 313 residues: Beta-ketoacyl-[acyl-carrier-protein] synthase III (313 aa).

Residues Cys112 and His238 contribute to the active site. The tract at residues 239–243 (QANIR) is ACP-binding. Asn268 is an active-site residue.

The protein belongs to the thiolase-like superfamily. FabH family. In terms of assembly, homodimer.

The protein localises to the cytoplasm. It catalyses the reaction malonyl-[ACP] + acetyl-CoA + H(+) = 3-oxobutanoyl-[ACP] + CO2 + CoA. It functions in the pathway lipid metabolism; fatty acid biosynthesis. Functionally, catalyzes the condensation reaction of fatty acid synthesis by the addition to an acyl acceptor of two carbons from malonyl-ACP. Catalyzes the first condensation reaction which initiates fatty acid synthesis and may therefore play a role in governing the total rate of fatty acid production. Possesses both acetoacetyl-ACP synthase and acetyl transacylase activities. Its substrate specificity determines the biosynthesis of branched-chain and/or straight-chain of fatty acids. The chain is Beta-ketoacyl-[acyl-carrier-protein] synthase III from Staphylococcus aureus (strain bovine RF122 / ET3-1).